Consider the following 331-residue polypeptide: L-lactate dehydrogenase A chain (331 aa).

NAD(+) contacts are provided by residues 29–57 (GMVG…MEDK) and Arg-98. The substrate site is built by Arg-105, Asn-137, and Arg-168. Asn-137 lines the NAD(+) pocket. Catalysis depends on His-192, which acts as the Proton acceptor. Thr-247 provides a ligand contact to substrate.

Belongs to the LDH/MDH superfamily. LDH family. As to quaternary structure, homotetramer.

It is found in the cytoplasm. The enzyme catalyses (S)-lactate + NAD(+) = pyruvate + NADH + H(+). It participates in fermentation; pyruvate fermentation to lactate; (S)-lactate from pyruvate: step 1/1. Interconverts simultaneously and stereospecifically pyruvate and lactate with concomitant interconversion of NADH and NAD(+). In Chaenocephalus aceratus (Blackfin icefish), this protein is L-lactate dehydrogenase A chain (ldha).